Here is a 72-residue protein sequence, read N- to C-terminus: uncharacterized protein (72 aa).

An N-terminal signal peptide occupies residues 1–22; sequence MQSNFIFATLLVLLSLLTFTYA. Residues 23–28 are Extracellular-facing; the sequence is SGSSSM. Residues 29–49 traverse the membrane as a helical segment; it reads TSSSMPMFGGAIVAAFAFAIF. The Cytoplasmic portion of the chain corresponds to 50–72; that stretch reads SRLAQNFAPRAIFSLLPYHSVSC.

The protein localises to the membrane. This is an uncharacterized protein from Dictyostelium discoideum (Social amoeba).